The sequence spans 164 residues: S-ribosylhomocysteine lyase (164 aa).

The Fe cation site is built by His-61, His-65, and Cys-131.

It belongs to the LuxS family. Homodimer. The cofactor is Fe cation.

The catalysed reaction is S-(5-deoxy-D-ribos-5-yl)-L-homocysteine = (S)-4,5-dihydroxypentane-2,3-dione + L-homocysteine. Its function is as follows. Involved in the synthesis of autoinducer 2 (AI-2) which is secreted by bacteria and is used to communicate both the cell density and the metabolic potential of the environment. The regulation of gene expression in response to changes in cell density is called quorum sensing. Catalyzes the transformation of S-ribosylhomocysteine (RHC) to homocysteine (HC) and 4,5-dihydroxy-2,3-pentadione (DPD). This Bifidobacterium longum subsp. infantis (strain ATCC 15697 / DSM 20088 / JCM 1222 / NCTC 11817 / S12) protein is S-ribosylhomocysteine lyase.